Consider the following 275-residue polypeptide: NH(3)-dependent NAD(+) synthetase (275 aa).

50–57 (GISGGVDS) contacts ATP. A Mg(2+)-binding site is contributed by D56. Residue R147 coordinates deamido-NAD(+). T167 provides a ligand contact to ATP. E172 contributes to the Mg(2+) binding site. Positions 180 and 187 each coordinate deamido-NAD(+). Residues K196 and T218 each contribute to the ATP site. 267–268 (HK) contacts deamido-NAD(+).

This sequence belongs to the NAD synthetase family. As to quaternary structure, homodimer.

The catalysed reaction is deamido-NAD(+) + NH4(+) + ATP = AMP + diphosphate + NAD(+) + H(+). The protein operates within cofactor biosynthesis; NAD(+) biosynthesis; NAD(+) from deamido-NAD(+) (ammonia route): step 1/1. In terms of biological role, catalyzes the ATP-dependent amidation of deamido-NAD to form NAD. Uses ammonia as a nitrogen source. The chain is NH(3)-dependent NAD(+) synthetase from Pseudomonas savastanoi pv. phaseolicola (strain 1448A / Race 6) (Pseudomonas syringae pv. phaseolicola (strain 1448A / Race 6)).